A 117-amino-acid chain; its full sequence is NADH-ubiquinone oxidoreductase chain 3 (117 aa).

The next 3 membrane-spanning stretches (helical) occupy residues 3-23, 56-76, and 85-105; these read LLLT…IVSF, FFLV…LLPL, and PMFT…GLIY.

The protein belongs to the complex I subunit 3 family.

It is found in the mitochondrion membrane. The catalysed reaction is a ubiquinone + NADH + 5 H(+)(in) = a ubiquinol + NAD(+) + 4 H(+)(out). Core subunit of the mitochondrial membrane respiratory chain NADH dehydrogenase (Complex I) that is believed to belong to the minimal assembly required for catalysis. Complex I functions in the transfer of electrons from NADH to the respiratory chain. The immediate electron acceptor for the enzyme is believed to be ubiquinone. The chain is NADH-ubiquinone oxidoreductase chain 3 (MT-ND3) from Tetraodon nigroviridis (Spotted green pufferfish).